The sequence spans 266 residues: Small ribosomal subunit protein eS1 (266 aa).

Residues Gly-233–Val-266 are disordered. Positions Ser-244–Gly-257 are enriched in basic and acidic residues.

Belongs to the eukaryotic ribosomal protein eS1 family. In terms of assembly, component of the small ribosomal subunit. Mature ribosomes consist of a small (40S) and a large (60S) subunit. The 40S subunit contains about 33 different proteins and 1 molecule of RNA (18S). The 60S subunit contains about 49 different proteins and 3 molecules of RNA (28S, 5.8S and 5S). Part of the small subunit (SSU) processome, composed of more than 70 proteins and the RNA chaperone small nucleolar RNA (snoRNA) U3.

It is found in the cytoplasm. The protein localises to the nucleus. It localises to the nucleolus. Functionally, component of the small ribosomal subunit. The ribosome is a large ribonucleoprotein complex responsible for the synthesis of proteins in the cell. Part of the small subunit (SSU) processome, first precursor of the small eukaryotic ribosomal subunit. During the assembly of the SSU processome in the nucleolus, many ribosome biogenesis factors, an RNA chaperone and ribosomal proteins associate with the nascent pre-rRNA and work in concert to generate RNA folding, modifications, rearrangements and cleavage as well as targeted degradation of pre-ribosomal RNA by the RNA exosome. May play a role during erythropoiesis. In Salmo salar (Atlantic salmon), this protein is Small ribosomal subunit protein eS1 (rps3a).